A 147-amino-acid polypeptide reads, in one-letter code: Myoglobin (147 aa).

The Globin domain occupies 2-141; it reads ADFDAVLKCW…IIADLEANYK (140 aa). Histidine 60 contributes to the nitrite binding site. An O2-binding site is contributed by histidine 60. Histidine 89 is a heme b binding site.

Belongs to the globin family. As to quaternary structure, monomeric.

The protein resides in the cytoplasm. Its subcellular location is the sarcoplasm. It carries out the reaction Fe(III)-heme b-[protein] + nitric oxide + H2O = Fe(II)-heme b-[protein] + nitrite + 2 H(+). The catalysed reaction is H2O2 + AH2 = A + 2 H2O. In terms of biological role, monomeric heme protein which primary function is to store oxygen and facilitate its diffusion within muscle tissues. Reversibly binds oxygen through a pentacoordinated heme iron and enables its timely and efficient release as needed during periods of heightened demand. Depending on the oxidative conditions of tissues and cells, and in addition to its ability to bind oxygen, it also has a nitrite reductase activity whereby it regulates the production of bioactive nitric oxide. Under stress conditions, like hypoxia and anoxia, it also protects cells against reactive oxygen species thanks to its pseudoperoxidase activity. This chain is Myoglobin (mb), found in Thunnus alalunga (Albacore).